Here is a 195-residue protein sequence, read N- to C-terminus: Protein aq_1444 (195 aa).

One can recognise an AMMECR1 domain in the interval 1–191 (MDIRELVHLG…EKEPFGEVER (191 aa)).

This is Protein aq_1444 from Aquifex aeolicus (strain VF5).